Reading from the N-terminus, the 376-residue chain is GTPase Obg (376 aa).

The 158-residue stretch at 1–158 (MFIDSVNLTL…RDVRLELKLI (158 aa)) folds into the Obg domain. The region spanning 159-359 (ADVGLVGFPN…LKFSLLELLK (201 aa)) is the OBG-type G domain. GTP contacts are provided by residues 165 to 172 (GFPNVGKS), 190 to 194 (FTTLT), 212 to 215 (DIPG), 280 to 283 (TRMD), and 340 to 342 (SSA). Ser-172 and Thr-192 together coordinate Mg(2+).

Belongs to the TRAFAC class OBG-HflX-like GTPase superfamily. OBG GTPase family. As to quaternary structure, monomer. Requires Mg(2+) as cofactor.

It is found in the cytoplasm. An essential GTPase which binds GTP, GDP and possibly (p)ppGpp with moderate affinity, with high nucleotide exchange rates and a fairly low GTP hydrolysis rate. Plays a role in control of the cell cycle, stress response, ribosome biogenesis and in those bacteria that undergo differentiation, in morphogenesis control. The chain is GTPase Obg from Campylobacter curvus (strain 525.92).